Consider the following 243-residue polypeptide: Probable transcriptional regulatory protein LCABL_11860 (243 aa).

Residues 1–23 are disordered; that stretch reads MSGHSKWHNIQGRKNAQDSKRGK.

The protein belongs to the TACO1 family.

Its subcellular location is the cytoplasm. In Lacticaseibacillus casei (strain BL23) (Lactobacillus casei), this protein is Probable transcriptional regulatory protein LCABL_11860.